A 447-amino-acid chain; its full sequence is Tubulin beta-2 chain (447 aa).

Residues Gln-11, Glu-69, Ser-138, Gly-142, Thr-143, Gly-144, Asn-204, and Asn-226 each coordinate GTP. Glu-69 provides a ligand contact to Mg(2+). The disordered stretch occupies residues 427 to 447 (DASISEGEEEYEEEQQLENEE). A compositionally biased stretch (acidic residues) spans 432 to 447 (EGEEEYEEEQQLENEE).

Belongs to the tubulin family. As to quaternary structure, dimer of alpha and beta chains. A typical microtubule is a hollow water-filled tube with an outer diameter of 25 nm and an inner diameter of 15 nM. Alpha-beta heterodimers associate head-to-tail to form protofilaments running lengthwise along the microtubule wall with the beta-tubulin subunit facing the microtubule plus end conferring a structural polarity. Microtubules usually have 13 protofilaments but different protofilament numbers can be found in some organisms and specialized cells. It depends on Mg(2+) as a cofactor.

Its subcellular location is the cytoplasm. It is found in the cytoskeleton. Functionally, tubulin is the major constituent of microtubules, a cylinder consisting of laterally associated linear protofilaments composed of alpha- and beta-tubulin heterodimers. Microtubules grow by the addition of GTP-tubulin dimers to the microtubule end, where a stabilizing cap forms. Below the cap, tubulin dimers are in GDP-bound state, owing to GTPase activity of alpha-tubulin. The polypeptide is Tubulin beta-2 chain (TUB2) (Erysiphe pisi (Pea powdery mildew)).